The following is a 63-amino-acid chain: uncharacterized protein (63 aa).

The helical transmembrane segment at 37–57 (IFFPTTFDVLLLAILIFLACA) threads the bilayer.

Its subcellular location is the cell membrane. This is an uncharacterized protein from Bacillus subtilis (strain 168).